The sequence spans 663 residues: MAIPEEFDILVLGGGSSGSCIAGRLANLDHSLKVGLIEAGENNLNNPWVYLPGIYPRNMKLDSKTASFYTSNPSPHLNGRRAIVPCANVLGGGSSINFMMYTRGSASDYDDFQAEGWKTKDLLPLMKKTETYQRACNNPDIHGFEGPIKVSFGNYTYPVCQDFLRASESQGIPYVDDLEDLVTAHGAEHWLKWINRDTGRRSDSAHAFVHSTMRNHDNLYLICNTKVDKIIVEDGRAAAVRTVPSKPLNPKKPSHKIYRARKQIVLSCGTISSPLVLQRSGFGDPIKLRAAGVKPLVNLPGVGRNFQDHYCFFSPYRIKPQYESFDDFVRGDAEIQKRVFDQWYANGTGPLATNGIEAGVKIRPTPEELSQMDESFQEGYREYFEDKPDKPVMHYSIIAGFFGDHTKIPPGKYMTMFHFLEYPFSRGSIHITSPDPYAAPDFDPGFMNDERDMAPMVWAYKKSRETARRMDHFAGEVTSHHPLFPYSSEARALEMDLETSNAYGGPLNLSAGLAHGSWTQPLKKPTAKNEGHVTSNQVELHPDIEYDEEDDKAIENYIREHTETTWHCLGTCSIGPREGSKIVKWGGVLDHRSNVYGVKGLKVGDLSVCPDNVGCNTYTTALLIGEKTATLVGEDLGYSGEALDMTVPQFKLGTYEKTGLARF.

Asp-8 to Glu-38 provides a ligand contact to FAD. His-567 acts as the Proton acceptor in catalysis. The short motif at Ala-661–Phe-663 is the Microbody targeting signal element.

Belongs to the GMC oxidoreductase family. Homooctamer. FAD is required as a cofactor.

It is found in the peroxisome matrix. It catalyses the reaction a primary alcohol + O2 = an aldehyde + H2O2. It participates in energy metabolism; methane degradation. In terms of biological role, major isoform of alcohol oxidase, which catalyzes the oxidation of methanol to formaldehyde and hydrogen peroxide, the first step in the methanol utilization pathway of methylotrophic yeasts. The chain is Alcohol oxidase 1 (AOX1) from Komagataella phaffii (strain ATCC 76273 / CBS 7435 / CECT 11047 / NRRL Y-11430 / Wegner 21-1) (Yeast).